Here is a 142-residue protein sequence, read N- to C-terminus: Glia maturation factor beta (142 aa).

At Ser2 the chain carries N-acetylserine. The 136-residue stretch at 4–139 (SLVVCDVAED…TEEWLREKLG (136 aa)) folds into the ADF-H domain.

It belongs to the actin-binding proteins ADF family. GMF subfamily. Phosphorylated; stimulated by phorbol ester.

Its function is as follows. This protein causes differentiation of brain cells, stimulation of neural regeneration, and inhibition of proliferation of tumor cells. This Homo sapiens (Human) protein is Glia maturation factor beta (GMFB).